We begin with the raw amino-acid sequence, 129 residues long: M-zodatoxin-Lt8a (129 aa).

The first 20 residues, Met-1–Ser-20, serve as a signal peptide directing secretion. The propeptide occupies Lys-21–Arg-60. The Processing quadruplet motif signature appears at Glu-57–Arg-60.

The protein belongs to the cationic peptide 06 (cytoinsectotoxin) family. Cleavage of the propeptide depends on the processing quadruplet motif (XXXR, with at least one of X being E). Expressed by the venom gland.

It is found in the secreted. Insecticidal, cytolytic and antimicrobial peptide. Has insecticidal activity against the flesh fly S.carnaria, and against the cockroach N.cinerea. Has insecticidal activity against D.melanogaster. Has hemolytic activity against human erythrocytes (EC(50)=6 uM). Has cytolytic activity against insect Sf9 cells (EC(50)=1 uM) and human leukocytes (EC(50)=3 uM). Has antibacterial activity against the Gram-positive bacteria A.globiformis VKM Ac-1112 (MIC=0.5 uM), and B.subtilis VKM B-501 (MIC=0.6-0.9 uM), and against the Gram-negative bacteria E.coli C600 (MIC=0.5 uM), E.coli DH5alpha (MIC=0.9 uM), E.coli MH1 (MIC=0.5 uM), P.aeruginosa PAO1 (MIC=1.9 uM), and P.fluorescens VKM B-894 (MIC=3.8 uM). Lacks antimicrobial activity against the Gram-positive bacteria M.luteus and S.aureus, and against the Gram-negative bacterium S.marcescens. Forms voltage-dependent, ion-permeable channels in membranes. At high concentration causes cell membrane lysis. This is M-zodatoxin-Lt8a (cit 1-1) from Lachesana tarabaevi (Spider).